A 1182-amino-acid chain; its full sequence is NACHT, LRR and PYD domains-containing protein 1a (1182 aa).

Residues 1–23 (MEESQSKQESSTKVAQHEGQEDV) are disordered. Residues 133–442 (QLVIIEGAAG…EFFAAMSYIL (310 aa)) enclose the NACHT domain. 139–146 (GAAGIGKS) lines the ATP pocket. LRR repeat units lie at residues 634 to 655 (NLEELDLSGNPLSYYAVHSLCT), 691 to 711 (SLTELDLQLNDLGDGGVKMLC), and 720 to 743 (NLSILWLDQASLSDQVIAELRTLE). The tract at residues 780–806 (QQRQQSGDKHMEPLGTEDEFWGPTGPV) is disordered. The segment at 799 to 932 (FWGPTGPVTT…HYAVLENPSF (134 aa)) is ZU5. One can recognise an FIIND domain in the interval 799 to 1082 (FWGPTGPVTT…LRPALPKIAT (284 aa)). Residues 933-1082 (SPMGILLRMI…LRPALPKIAT (150 aa)) are UPA. One can recognise a CARD domain in the interval 1092-1175 (HFMDQHREQL…HLVMDILEKL (84 aa)).

It belongs to the NLRP family. In terms of assembly, interacts (via LRR repeats) with BCL2 and BCL2L1 (via the loop between motifs BH4 and BH3). Interacts with NOD2; this interaction is enhanced in the presence of muramyl dipeptide (MDP) and increases IL1B release. Interacts with EIF2AK2/PKR; this interaction requires EIF2AK2 activity, is accompanied by EIF2AK2 autophosphorylation and promotes inflammasome assembly in response to danger-associated signals. Interacts with MEFV; this interaction targets Nlrp1a to degradation by autophagy, hence preventing excessive IL1B- and IL18-mediated inflammation. Interacts with DPP9; leading to inhibit activation of the inflammasome. DPP9 acts via formation of a ternary complex, composed of a DPP9 homodimer, one full-length Nlrp1a protein, and one cleaved C-terminus of Nlrp1a (NACHT, LRR and PYD domains-containing protein 1a, C-terminus). Interacts with DPP8; leading to inhibit activation of the inflammasome, probably via formation of a ternary complex with DPP8. Interacts with the C-terminal part of Nlrp1a (NACHT, LRR and PYD domains-containing protein 1a, C-terminus) in absence of pathogens and other damage-associated signals. As to quaternary structure, interacts with the N-terminal part of Nlrp1a (NACHT, LRR and PYD domains-containing protein 1a, N-terminus) in absence of pathogens and other damage-associated signals. Homomultimer; forms the Nlrp1a inflammasome polymeric complex, a filament composed of homopolymers of this form in response to pathogens and other damage-associated signals. Interacts (via CARD domain) with CASP1 (via CARD domain); leading to CASP1 activation. Autocatalytically cleaved. Autocatalytic cleavage in FIIND region occurs constitutively, prior to activation signals, and is required for inflammasome activity (IL1B release), possibly by facilitating CASP1 binding. Both N- and C-terminal parts remain associated non-covalently. In terms of processing, ubiquitinated in response to pathogen-associated signals, leading to its degradation by the proteasome and subsequent release of the cleaved C-terminal part of the protein (NACHT, LRR and PYD domains-containing protein 1a, C-terminus), which polymerizes and forms the Nlrp1a inflammasome. In terms of tissue distribution, highly expressed in hematopoietic stem cells and progenitor cells of both myeloid and lymphoid origin. The expression is highly strain-dependent. Not expressed in Balb/cJ animals, but widely expressed in C57BL/6J. Expressed in macrophages resistant to Bacillus anthracis lethal toxin, but not in toxin-sensitive macrophages, except in CAST/EiJ strain.

Its subcellular location is the cytoplasm. The protein localises to the cytosol. It is found in the nucleus. The protein resides in the inflammasome. With respect to regulation, nlrp1a inflammasome is activated by pathogens and other damage-associated signals: activation promotes ubiquitination and degradation of the N-terminal part, releasing the cleaved C-terminal part of the protein (NACHT, LRR and PYD domains-containing protein 1a, C-terminus), which polymerizes and forms the Nlrp1a inflammasome. Nlrp1a inflammasome is inhibited by DPP8 and DPP9, which sequester the C-terminal fragment of Nlrp1a (NACHT, LRR and PYD domains-containing protein 1a, C-terminus) in a ternary complex, thereby preventing Nlrp1a oligomerization and activation. Nlrp1a inflammasome is activated by Val-boroPro (Talabostat, PT-100), an inhibitor of dipeptidyl peptidases DPP8 and DPP9. Val-boroPro relieves inhibition of DPP8 and/or DPP9 by promoting disruption of the ternary complex, releasing its C-terminal part from autoinhibition. Its function is as follows. Acts as the sensor component of the Nlrp1a inflammasome, which mediates inflammasome activation in response to various pathogen-associated signals, leading to subsequent pyroptosis. Inflammasomes are supramolecular complexes that assemble in the cytosol in response to pathogens and other damage-associated signals and play critical roles in innate immunity and inflammation. Acts as a recognition receptor (PRR): recognizes specific pathogens and other damage-associated signals, and mediates the formation of the inflammasome polymeric complex. In response to pathogen-associated signals, the N-terminal part of Nlrp1a is degraded by the proteasome, releasing the cleaved C-terminal part of the protein (NACHT, LRR and PYD domains-containing protein 1a, C-terminus), which polymerizes to initiate the formation of the inflammasome complex: the inflammasome recruits pro-caspase-1 (proCASP1) and promotes caspase-1 (CASP1) activation, which subsequently cleaves and activates inflammatory cytokines IL1B and IL18 and gasdermin-D (GSDMD), leading to pyroptosis. In the absence of GSDMD expression, the Nlrp1a inflammasome is able to recruit and activate CASP8, leading to activation of gasdermin-E (GSDME). Activation of Nlrp1a inflammasome is also required for HMGB1 secretion; the active cytokines and HMGB1 stimulate inflammatory responses. When activated in the bone marrow, induces the pyroptosis of hematopoietic stem cells and progenitor cells of both myeloid and lymphoid lineages, hence allowing the removal of damaged cells, and the release of IL1B, which induces granulopoiesis. Functionally, constitutes the precursor of the Nlrp1a inflammasome, which mediates autoproteolytic processing within the FIIND domain to generate the N-terminal and C-terminal parts, which are associated non-covalently in absence of pathogens and other damage-associated signals. Regulatory part that prevents formation of the Nlrp1a inflammasome: in absence of pathogens and other damage-associated signals, interacts with the C-terminal part of Nlrp1a (NACHT, LRR and PYD domains-containing protein 1a, C-terminus), preventing activation of the Nlrp1a inflammasome. In response to pathogen-associated signals, this part is ubiquitinated and degraded by the proteasome, releasing the cleaved C-terminal part of the protein, which polymerizes and forms the Nlrp1a inflammasome. In terms of biological role, constitutes the active part of the Nlrp1a inflammasome. In absence of pathogens and other damage-associated signals, interacts with the N-terminal part of Nlrp1a (NACHT, LRR and PYD domains-containing protein 1a, N-terminus), preventing activation of the Nlrp1a inflammasome. In response to pathogen-associated signals, the N-terminal part of Nlrp1a is degraded by the proteasome, releasing this form, which polymerizes to form the Nlrp1a inflammasome complex: the Nlrp1a inflammasome complex then directly recruits pro-caspase-1 (proCASP1) and promotes caspase-1 (CASP1) activation, leading to gasdermin-D (GSDMD) cleavage and subsequent pyroptosis. The chain is NACHT, LRR and PYD domains-containing protein 1a from Mus musculus (Mouse).